Here is a 744-residue protein sequence, read N- to C-terminus: Tripartite motif-containing protein 2 (744 aa).

A Phosphoserine modification is found at Ser-10. The RING-type zinc finger occupies 23 to 64; it reads CSICLERYKNPKVLPCLHTFCERCLQNYIPAHSLTLSCPVCR. Residues 113–154 form a B box-type zinc finger; sequence GKPLSCPNHDGNVMEFYCQSCETAMCRECTEGEHAEHPTVPL. Zn(2+) contacts are provided by Cys-118, His-121, Cys-141, and His-146. Residues 320–421 form a Filamin repeat; that stretch reads TTNAVASETV…IRGSPFKLKV (102 aa). Phosphothreonine is present on Thr-371. A phosphoserine mark is found at Ser-375, Ser-424, and Ser-428. Residues 432–462 are disordered; the sequence is EGVKRRVKSPGSGHVKQKAVKRPASMYSTGK. NHL repeat units lie at residues 473–516, 520–563, 564–605, 609–652, 656–699, and 700–743; these read IFRV…FSND, KSRF…FSSD, GKFK…FQPN, VTRF…FNQE, MLKF…FDGS, and GSFL…YRYL.

It belongs to the TRIM/RBCC family. In terms of assembly, forms homooligomers. Interacts with TRIM3; this interaction reduces TRIM2 activity. Interacts with myosin V; myosin V may not be a substrate for ubiquitination. Interacts with NEFL. Interacts with phosphorylated BCL2L11. Interacts with SIRPA. RING-type zinc finger-dependent and UBE2D1-dependent autoubiquitination.

The protein resides in the cytoplasm. It catalyses the reaction S-ubiquitinyl-[E2 ubiquitin-conjugating enzyme]-L-cysteine + [acceptor protein]-L-lysine = [E2 ubiquitin-conjugating enzyme]-L-cysteine + N(6)-ubiquitinyl-[acceptor protein]-L-lysine.. Its pathway is protein modification; protein ubiquitination. In terms of biological role, UBE2D1-dependent E3 ubiquitin-protein ligase that mediates the ubiquitination of NEFL and of phosphorylated BCL2L11. Plays a neuroprotective function. May play a role in neuronal rapid ischemic tolerance. Plays a role in antiviral immunity and limits New World arenavirus infection independently of its ubiquitin ligase activity. The protein is Tripartite motif-containing protein 2 (TRIM2) of Callithrix jacchus (White-tufted-ear marmoset).